Consider the following 632-residue polypeptide: 1-deoxy-D-xylulose-5-phosphate synthase (632 aa).

Thiamine diphosphate contacts are provided by residues histidine 79 and 120–122 (GHA). Aspartate 152 is a Mg(2+) binding site. Residues 153 to 154 (GA), asparagine 181, phenylalanine 293, and glutamate 377 each bind thiamine diphosphate. Asparagine 181 is a binding site for Mg(2+).

The protein belongs to the transketolase family. DXPS subfamily. In terms of assembly, homodimer. Mg(2+) serves as cofactor. Thiamine diphosphate is required as a cofactor.

It carries out the reaction D-glyceraldehyde 3-phosphate + pyruvate + H(+) = 1-deoxy-D-xylulose 5-phosphate + CO2. Its pathway is metabolic intermediate biosynthesis; 1-deoxy-D-xylulose 5-phosphate biosynthesis; 1-deoxy-D-xylulose 5-phosphate from D-glyceraldehyde 3-phosphate and pyruvate: step 1/1. Catalyzes the acyloin condensation reaction between C atoms 2 and 3 of pyruvate and glyceraldehyde 3-phosphate to yield 1-deoxy-D-xylulose-5-phosphate (DXP). The protein is 1-deoxy-D-xylulose-5-phosphate synthase of Parabacteroides distasonis (strain ATCC 8503 / DSM 20701 / CIP 104284 / JCM 5825 / NCTC 11152).